The following is a 468-amino-acid chain: Cyclin-T1.1 (468 aa).

Residues 336–354 (KERGVEEERRKRERDRMAG) are compositionally biased toward basic and acidic residues. The interval 336 to 468 (KERGVEEERR…DMDLEDGELE (133 aa)) is disordered. A compositionally biased stretch (pro residues) spans 387–402 (APPPIPPQLNFPPPPI). Acidic residues predominate over residues 458–468 (SDMDLEDGELE).

The protein belongs to the cyclin family. Cyclin C subfamily.

In terms of biological role, regulatory subunit of the cyclin-dependent kinase pair (CDK9/cyclin T) complex, also called positive transcription elongation factor B (P-TEFb), which is proposed to facilitate the transition from abortive to production elongation by phosphorylating the CTD (carboxy-terminal domain) of the large subunit of RNA polymerase II (RNAP II). The polypeptide is Cyclin-T1.1 (Caenorhabditis elegans).